The chain runs to 477 residues: Trigger factor (477 aa).

In terms of domain architecture, PPIase FKBP-type spans 169 to 254 (EDRVTIDYLG…VKEVAKPNEL (86 aa)). The segment at 435-477 (VSKEELTAEDEDAASEAKPAKKAAAKKKAAPKKKAEEGKSEEA) is disordered. The segment covering 454–466 (AKKAAAKKKAAPK) has biased composition (basic residues). The span at 467–477 (KKAEEGKSEEA) shows a compositional bias: basic and acidic residues.

The protein belongs to the FKBP-type PPIase family. Tig subfamily.

It is found in the cytoplasm. It carries out the reaction [protein]-peptidylproline (omega=180) = [protein]-peptidylproline (omega=0). Involved in protein export. Acts as a chaperone by maintaining the newly synthesized protein in an open conformation. Functions as a peptidyl-prolyl cis-trans isomerase. The chain is Trigger factor (tig) from Brucella melitensis biotype 1 (strain ATCC 23456 / CCUG 17765 / NCTC 10094 / 16M).